We begin with the raw amino-acid sequence, 718 residues long: MSTEGSAVDTLTIEEAAAELERLAKEIAHHDALYHGKDQPEISDADYDALKRRNDALEARFPELIREDSPSRHVGAAPSVTFSPVVHARPMLSLDNTFSQEDVQDFVAGVYRFLGRLPDQSIAFTAEPKIDGLSMSIRYENGRLVTAATRGDGTTGENVTANIRTIAEIPNELPKGVPAVVEIRGEVYMAKSDFLALNRQMEAEGKQTYVNPRNTAAGSLRQLDAKVTASRKLKFFAYAWGEMAEMPADTQFGMVQTFKDWGFPVNPLMKRLNSVADILAHYDEIGLERPDLDYDIDGVVYKVDSLELQQRLGFRSRSPRWATAHKFPAEQAFTEVEKIEIQVGRTGALTPVARLKPITVGGVVVTNATLHNEDYIKGIGNSGERIRPEEHDIREGDTVIVQRAGDVIPQILDVVMEKRAADARSYEFPKTCPVCGSHAVREVNEKTGKTDSVRRCTGGFICRAQATEHLKHFVSRNAFDIEGLGSKQVDFFFENEDPSLQIRTAPEIFTLEKRQQDSLTKLENIDGFGKVSVGKLYAAINERRSIALHRFIYALGIRHVGETTAKLLARSYGTYEAFATAMKEAAPLSGEAWTDLNAIEGIGEVVARAMVEFYKEPRNVEVIGRLLDEVTPAEAEQPVTAGSPVAGKTVVFTGSLEKFTRDEAKARAESLGAKVAGSVSKKTDIVVAGPGAGSKLDKARELGVQTMDEDEWLALISG.

NAD(+)-binding positions include 44 to 48 (DADYD), 93 to 94 (SL), and Glu-127. Residue Lys-129 is the N6-AMP-lysine intermediate of the active site. NAD(+) contacts are provided by Arg-150, Glu-186, Lys-302, and Lys-326. Residues Cys-432, Cys-435, Cys-456, and Cys-462 each coordinate Zn(2+). Positions 640-718 (TAGSPVAGKT…EDEWLALISG (79 aa)) constitute a BRCT domain.

It belongs to the NAD-dependent DNA ligase family. LigA subfamily. Mg(2+) is required as a cofactor. The cofactor is Mn(2+).

The enzyme catalyses NAD(+) + (deoxyribonucleotide)n-3'-hydroxyl + 5'-phospho-(deoxyribonucleotide)m = (deoxyribonucleotide)n+m + AMP + beta-nicotinamide D-nucleotide.. In terms of biological role, DNA ligase that catalyzes the formation of phosphodiester linkages between 5'-phosphoryl and 3'-hydroxyl groups in double-stranded DNA using NAD as a coenzyme and as the energy source for the reaction. It is essential for DNA replication and repair of damaged DNA. This chain is DNA ligase, found in Rhizobium etli (strain CIAT 652).